Here is a 436-residue protein sequence, read N- to C-terminus: 3-ketoacyl-CoA thiolase (436 aa).

C99 acts as the Acyl-thioester intermediate in catalysis. Active-site proton acceptor residues include H392 and C422.

This sequence belongs to the thiolase-like superfamily. Thiolase family. Heterotetramer of two alpha chains (FadJ) and two beta chains (FadI).

It is found in the cytoplasm. The catalysed reaction is an acyl-CoA + acetyl-CoA = a 3-oxoacyl-CoA + CoA. It participates in lipid metabolism; fatty acid beta-oxidation. Functionally, catalyzes the final step of fatty acid oxidation in which acetyl-CoA is released and the CoA ester of a fatty acid two carbons shorter is formed. The polypeptide is 3-ketoacyl-CoA thiolase (Enterobacter sp. (strain 638)).